A 220-amino-acid polypeptide reads, in one-letter code: Zinc finger protein 36 (220 aa).

The C2H2-type 1 zinc-finger motif lies at 73–95 (FRCTVCGKAFASYQALGGHKSSH). The disordered stretch occupies residues 90-134 (GHKSSHRKPPSPGDHYGAAAAAQQLASAGDSKEDSASSAAGSTGP). Residues 107-117 (AAAAAQQLASA) are compositionally biased toward low complexity. The C2H2-type 2 zinc-finger motif lies at 135–157 (HRCTICRRSFATGQALGGHKRCH).

In terms of biological role, probable transcription factor involved in abscisic acid (ABA) signaling. Required for the regulation of the cross-talk between NADPH oxidase, hydrogen peroxide and MAP kinase in ABA signaling. Regulates the expression of the NADPH oxidase genes RBOHB and RBOHE, and the MAPK genes MPK1, MPK4, MPK5, MPK7 and MPK14. Regulates ABA-induced hydrogen peroxide production and antioxidant defense. Required for tolerance to water stress and oxidative stress. The polypeptide is Zinc finger protein 36 (Oryza sativa subsp. japonica (Rice)).